The following is a 388-amino-acid chain: Succinate--CoA ligase [ADP-forming] subunit beta (388 aa).

The ATP-grasp domain occupies 9 to 244 (KQLFAEYGLP…PSQDDPREAH (236 aa)). ATP contacts are provided by residues Lys-46, 53–55 (GRG), Glu-99, Thr-102, and Glu-107. Positions 199 and 213 each coordinate Mg(2+). Substrate is bound by residues Asn-264 and 321-323 (GIV).

The protein belongs to the succinate/malate CoA ligase beta subunit family. Heterotetramer of two alpha and two beta subunits. Mg(2+) serves as cofactor.

The enzyme catalyses succinate + ATP + CoA = succinyl-CoA + ADP + phosphate. It catalyses the reaction GTP + succinate + CoA = succinyl-CoA + GDP + phosphate. Its pathway is carbohydrate metabolism; tricarboxylic acid cycle; succinate from succinyl-CoA (ligase route): step 1/1. Succinyl-CoA synthetase functions in the citric acid cycle (TCA), coupling the hydrolysis of succinyl-CoA to the synthesis of either ATP or GTP and thus represents the only step of substrate-level phosphorylation in the TCA. The beta subunit provides nucleotide specificity of the enzyme and binds the substrate succinate, while the binding sites for coenzyme A and phosphate are found in the alpha subunit. This is Succinate--CoA ligase [ADP-forming] subunit beta from Ectopseudomonas mendocina (strain ymp) (Pseudomonas mendocina).